We begin with the raw amino-acid sequence, 228 residues long: 7-cyano-7-deazaguanine synthase (228 aa).

Position 16 to 26 (16 to 26 (FSGGQDSTTCL)) interacts with ATP. Residues Cys195, Cys203, Cys206, and Cys209 each contribute to the Zn(2+) site.

This sequence belongs to the QueC family. Zn(2+) serves as cofactor.

The catalysed reaction is 7-carboxy-7-deazaguanine + NH4(+) + ATP = 7-cyano-7-deazaguanine + ADP + phosphate + H2O + H(+). The protein operates within purine metabolism; 7-cyano-7-deazaguanine biosynthesis. In terms of biological role, catalyzes the ATP-dependent conversion of 7-carboxy-7-deazaguanine (CDG) to 7-cyano-7-deazaguanine (preQ(0)). In Haemophilus influenzae (strain ATCC 51907 / DSM 11121 / KW20 / Rd), this protein is 7-cyano-7-deazaguanine synthase.